Here is a 937-residue protein sequence, read N- to C-terminus: Diacylglycerol kinase theta (937 aa).

The interval 1–48 (MATAAESGARTWPGSGSPRLGSPAGSPVLGISGRARPGSGPERTGRAI) is disordered. 2 positions are modified to phosphoserine: Ser22 and Ser26. 3 Phorbol-ester/DAG-type zinc fingers span residues 54–102 (GHSF…KTPC), 115–162 (AHCF…CSDC), and 177–228 (HHHW…TPEC). Residues 359–378 (GKAGTTEEETSKDSGPGDSV) form a disordered region. Residues 390 to 489 (TQEILKIYPD…TRFYVAEARA (100 aa)) enclose the Ras-associating domain. Short sequence motifs (LXXLL motif) lie at residues 550–554 (LYMLA) and 569–573 (LPDVL). One can recognise a DAGKc domain in the interval 579–716 (PDCCPLLVFV…MDRWTILLDA (138 aa)). Positions 911-937 (AKQKPRKAGAIRDTRVDTLPAPEGNPL) are disordered.

Belongs to the eukaryotic diacylglycerol kinase family. As to quaternary structure, interacts with RHOA (constitutively activated, GTP-bound); the interaction inhibits DGKQ. Interacts with PRKCE. Interacts with PRKCH. Interacts with PLCB1. Interacts with NR5A1; the interaction requires both LXXLL motifs in DGKQ and is required for full phosphatidic acid-mediated activation of NR5A1. In terms of processing, phosphorylated by PRKCE and PRKCH in vitro. As to expression, widely expressed with higher expression in the brain and, to a lesser extent, in the small intestine, duodenum, and liver. In brain, expressed in gray matter. Expression is most intense in the cerebellar cortex and hippocampus, while moderate expression is seen in the olfactory bulb neuronal layers and brain stem nuclei. In the cerebellar cortex, equally expressed in both the Purkinje cell somata and the granule cells.

It is found in the cytoplasm. It localises to the cytosol. Its subcellular location is the cell membrane. The protein localises to the synapse. The protein resides in the cytoskeleton. It is found in the nucleus. It localises to the nucleus speckle. Its subcellular location is the nucleus matrix. The enzyme catalyses a 1,2-diacyl-sn-glycerol + ATP = a 1,2-diacyl-sn-glycero-3-phosphate + ADP + H(+). It catalyses the reaction a 1-O-alkyl-sn-glycerol + ATP = a 1-O-alkyl-sn-glycero-3-phosphate + ADP + H(+). The catalysed reaction is 1-O-alkyl-2-acyl-sn-glycerol + ATP = 1-O-alkyl-2-acyl-sn-glycero-3-phosphate + ADP + H(+). It carries out the reaction 1,2-di-(9Z-octadecenoyl)-sn-glycerol + ATP = 1,2-di-(9Z-octadecenoyl)-sn-glycero-3-phosphate + ADP + H(+). The enzyme catalyses 1-O-hexadecyl-sn-glycerol + ATP = 1-O-hexadecyl-sn-glycero-3-phosphate + ADP + H(+). It catalyses the reaction 1-O-hexadecyl-2-acetyl-sn-glycerol + ATP = 1-O-hexadecyl-2-acetyl-sn-glycero-3-phosphate + ADP + H(+). The catalysed reaction is 1-octadecanoyl-2-(5Z,8Z,11Z,14Z-eicosatetraenoyl)-sn-glycerol + ATP = 1-octadecanoyl-2-(5Z,8Z,11Z,14Z-eicosatetraenoyl)-sn-glycero-3-phosphate + ADP + H(+). The protein operates within lipid metabolism; glycerolipid metabolism. Activated by phosphatidylserine. Its function is as follows. Diacylglycerol kinase that converts diacylglycerol/DAG into phosphatidic acid/phosphatidate/PA and regulates the respective levels of these two bioactive lipids. Thereby, acts as a central switch between the signaling pathways activated by these second messengers with different cellular targets and opposite effects in numerous biological processes. Within the adrenocorticotropic hormone signaling pathway, produces phosphatidic acid which in turn activates NR5A1 and subsequent steroidogenic gene transcription. Also functions downstream of the nerve growth factor signaling pathway being specifically activated in the nucleus by the growth factor. Through its diacylglycerol activity also regulates synaptic vesicle endocytosis. The chain is Diacylglycerol kinase theta from Rattus norvegicus (Rat).